The primary structure comprises 225 residues: KDP operon transcriptional regulatory protein KdpE (225 aa).

The region spanning 3–116 (NVLIVEDEQA…ELQARLRVAL (114 aa)) is the Response regulatory domain. Aspartate 52 bears the 4-aspartylphosphate mark. The segment at residues 126-225 (DPLVKFSDVT…ETGIGYRFML (100 aa)) is a DNA-binding region (ompR/PhoB-type).

Post-translationally, phosphorylated by KdpD.

Its subcellular location is the cytoplasm. Member of the two-component regulatory system KdpD/KdpE involved in the regulation of the kdp operon. This Escherichia coli (strain K12) protein is KDP operon transcriptional regulatory protein KdpE (kdpE).